A 285-amino-acid polypeptide reads, in one-letter code: uncharacterized protein (285 aa).

The ATP-grasp domain maps to Phe107 to Pro285.

This is an uncharacterized protein from Mycoplasma pneumoniae (strain ATCC 29342 / M129 / Subtype 1) (Mycoplasmoides pneumoniae).